Here is a 652-residue protein sequence, read N- to C-terminus: Sodium-dependent nutrient amino acid transporter 1 (652 aa).

A disordered region spans residues 1 to 54 (MELKGVHQQNGTSNGTGAVGAEGESAPPTAPATAEAAASLETTTEKVDAEQQKP). The Cytoplasmic portion of the chain corresponds to 1-58 (MELKGVHQQNGTSNGTGAVGAEGESAPPTAPATAEAAASLETTTEKVDAEQQKPERTN). Residues 7-16 (HQQNGTSNGT) are compositionally biased toward polar residues. Residues 21-42 (AEGESAPPTAPATAEAAASLET) are compositionally biased toward low complexity. The span at 43-54 (TTEKVDAEQQKP) shows a compositional bias: basic and acidic residues. 4 helical membrane-spanning segments follow: residues 59–79 (WGNGLEFLMSCISVSVGLGNV), 92–112 (GAFLIPYIIVLFLIGKPMYYL), 130–150 (VVPGFVGVGYGQAFATICIIT), and 155–175 (LLALTLYYLFVSFQSVLPWSY). 2 N-linked (GlcNAc...) asparagine glycosylation sites follow: asparagine 201 and asparagine 204. The next 9 membrane-spanning stretches (helical) occupy residues 240-260 (PDWKLTLALFVSWVVIFLVIM), 269-289 (AAYFLALFPYVVLFILLVRAV), 318-338 (AVVQCFFSLAVGSGPIIMFAS), 352-372 (IVTTLDTLTSLLGGITIFAIL), 412-432 (LFSVLFFFMLFVLGIGSIVAL), 458-478 (ICGFLMGLVYVTPGGQWILTL), 485-505 (TYVVFILAIFELAGIVWIYGM), 527-547 (CWSFFTPVMMIVIFIYSMVTI), and 564-584 (AGWLLFGIGAAQFPLWWMWYI).

The protein belongs to the sodium:neurotransmitter symporter (SNF) (TC 2.A.22) family.

Its subcellular location is the membrane. Unusual broad substrate spectrum amino acid:sodium cotransporter that promotes absorption of the D isomers of essential amino acids. Neutral amino acids are the preferred substrates, especially methionine and phenylalanine. This chain is Sodium-dependent nutrient amino acid transporter 1, found in Drosophila persimilis (Fruit fly).